The chain runs to 313 residues: 4-hydroxy-3-methylbut-2-enyl diphosphate reductase (313 aa).

[4Fe-4S] cluster is bound at residue C12. The (2E)-4-hydroxy-3-methylbut-2-enyl diphosphate site is built by H41 and H74. Positions 41 and 74 each coordinate dimethylallyl diphosphate. The isopentenyl diphosphate site is built by H41 and H74. Residue C96 coordinates [4Fe-4S] cluster. H124 contributes to the (2E)-4-hydroxy-3-methylbut-2-enyl diphosphate binding site. Residue H124 participates in dimethylallyl diphosphate binding. H124 is a binding site for isopentenyl diphosphate. E126 (proton donor) is an active-site residue. T164 contributes to the (2E)-4-hydroxy-3-methylbut-2-enyl diphosphate binding site. A [4Fe-4S] cluster-binding site is contributed by C194. (2E)-4-hydroxy-3-methylbut-2-enyl diphosphate contacts are provided by S222, S223, N224, and S266. Residues S222, S223, N224, and S266 each coordinate dimethylallyl diphosphate. S222, S223, N224, and S266 together coordinate isopentenyl diphosphate.

This sequence belongs to the IspH family. Requires [4Fe-4S] cluster as cofactor.

It carries out the reaction isopentenyl diphosphate + 2 oxidized [2Fe-2S]-[ferredoxin] + H2O = (2E)-4-hydroxy-3-methylbut-2-enyl diphosphate + 2 reduced [2Fe-2S]-[ferredoxin] + 2 H(+). It catalyses the reaction dimethylallyl diphosphate + 2 oxidized [2Fe-2S]-[ferredoxin] + H2O = (2E)-4-hydroxy-3-methylbut-2-enyl diphosphate + 2 reduced [2Fe-2S]-[ferredoxin] + 2 H(+). It functions in the pathway isoprenoid biosynthesis; dimethylallyl diphosphate biosynthesis; dimethylallyl diphosphate from (2E)-4-hydroxy-3-methylbutenyl diphosphate: step 1/1. The protein operates within isoprenoid biosynthesis; isopentenyl diphosphate biosynthesis via DXP pathway; isopentenyl diphosphate from 1-deoxy-D-xylulose 5-phosphate: step 6/6. Its function is as follows. Catalyzes the conversion of 1-hydroxy-2-methyl-2-(E)-butenyl 4-diphosphate (HMBPP) into a mixture of isopentenyl diphosphate (IPP) and dimethylallyl diphosphate (DMAPP). Acts in the terminal step of the DOXP/MEP pathway for isoprenoid precursor biosynthesis. In Protochlamydia amoebophila (strain UWE25), this protein is 4-hydroxy-3-methylbut-2-enyl diphosphate reductase.